We begin with the raw amino-acid sequence, 119 residues long: Small ribosomal subunit protein uS13 (119 aa).

Residues 92–110 are compositionally biased toward basic residues; sequence RKDTCKRSTKKNARTRKGP. The disordered stretch occupies residues 92 to 119; it reads RKDTCKRSTKKNARTRKGPKKDNRWKER.

It belongs to the universal ribosomal protein uS13 family. As to quaternary structure, part of the 30S ribosomal subunit. Forms a loose heterodimer with protein S19. Forms two bridges to the 50S subunit in the 70S ribosome.

Its function is as follows. Located at the top of the head of the 30S subunit, it contacts several helices of the 16S rRNA. In the 70S ribosome it contacts the 23S rRNA (bridge B1a) and protein L5 of the 50S subunit (bridge B1b), connecting the 2 subunits; these bridges are implicated in subunit movement. Contacts the tRNAs in the A and P-sites. This chain is Small ribosomal subunit protein uS13, found in Mycoplasma sp.